We begin with the raw amino-acid sequence, 501 residues long: Probable cytochrome P450 508A4 (501 aa).

The chain crosses the membrane as a helical span at residues M1–Y21. C445 provides a ligand contact to heme.

Belongs to the cytochrome P450 family. It depends on heme as a cofactor.

It is found in the membrane. The polypeptide is Probable cytochrome P450 508A4 (cyp508A4) (Dictyostelium discoideum (Social amoeba)).